The following is a 159-amino-acid chain: MADLFALTEEALAGMGIELVDVERAALGLLRVTIDREDGVRIEDCEQVSRQLSRVYEVENIDYKRLEVGSPGVDRPLRNEAEFRRFAGERIEIKLREAVDGRKVFTGILQEADTSADDKTVFGLEFEAKKDDIQVLSFTLDDIERAKLDPVLDFKGKKR.

The protein belongs to the RimP family.

It is found in the cytoplasm. Functionally, required for maturation of 30S ribosomal subunits. In Bordetella avium (strain 197N), this protein is Ribosome maturation factor RimP.